Consider the following 553-residue polypeptide: Glycerol-3-phosphate dehydrogenase (553 aa).

13–41 provides a ligand contact to FAD; it reads DLIVIGGGINGVGTARDGALRGLKTLLIE.

Belongs to the FAD-dependent glycerol-3-phosphate dehydrogenase family. FAD is required as a cofactor.

Its subcellular location is the cytoplasm. The enzyme catalyses a quinone + sn-glycerol 3-phosphate = dihydroxyacetone phosphate + a quinol. This chain is Glycerol-3-phosphate dehydrogenase (glpD), found in Synechocystis sp. (strain ATCC 27184 / PCC 6803 / Kazusa).